Consider the following 442-residue polypeptide: Threonine/serine transporter TdcC (442 aa).

11 helical membrane-spanning segments follow: residues 21 to 41 (TTWTLGLFGTAIGAGVLFFPI), 44 to 64 (GFGGLIPILIMLVLAYPIAFL), 96 to 116 (GVVITFLYFFAICPLLWIYGV), 139 to 159 (VVALALLLLMAVVIYFGKDLM), 162 to 182 (VMSFLVFPFIACLVLISLSLI), 206 to 226 (ILVTVWLGISIMVFSFNFSPI), 258 to 278 (ASILMVAVVMFFAFSCLFTLS), 312 to 332 (ITLEYAASLIALVAIFKSFFG), 364 to 384 (LISMFFIMGSTWLVAYINPNI), 388 to 408 (IEAMGAPIIASLLCLLPMYAI), and 422 to 442 (ENYFVTIVGLLTIFNIVYKLL).

It belongs to the amino acid/polyamine transporter 2 family. SdaC/TdcC subfamily.

It is found in the cell inner membrane. The enzyme catalyses L-threonine(in) + H(+)(in) = L-threonine(out) + H(+)(out). It catalyses the reaction L-serine(in) + H(+)(in) = L-serine(out) + H(+)(out). Its function is as follows. Involved in the import of threonine and serine into the cell, with the concomitant import of a proton (symport system). The sequence is that of Threonine/serine transporter TdcC from Yersinia enterocolitica serotype O:8 / biotype 1B (strain NCTC 13174 / 8081).